We begin with the raw amino-acid sequence, 145 residues long: D-aminoacyl-tRNA deacylase (145 aa).

The Gly-cisPro motif, important for rejection of L-amino acids signature appears at 137 to 138 (GP).

It belongs to the DTD family. In terms of assembly, homodimer.

It is found in the cytoplasm. It carries out the reaction glycyl-tRNA(Ala) + H2O = tRNA(Ala) + glycine + H(+). It catalyses the reaction a D-aminoacyl-tRNA + H2O = a tRNA + a D-alpha-amino acid + H(+). Functionally, an aminoacyl-tRNA editing enzyme that deacylates mischarged D-aminoacyl-tRNAs. Also deacylates mischarged glycyl-tRNA(Ala), protecting cells against glycine mischarging by AlaRS. Acts via tRNA-based rather than protein-based catalysis; rejects L-amino acids rather than detecting D-amino acids in the active site. By recycling D-aminoacyl-tRNA to D-amino acids and free tRNA molecules, this enzyme counteracts the toxicity associated with the formation of D-aminoacyl-tRNA entities in vivo and helps enforce protein L-homochirality. The polypeptide is D-aminoacyl-tRNA deacylase (Methylacidiphilum infernorum (isolate V4) (Methylokorus infernorum (strain V4))).